Reading from the N-terminus, the 211-residue chain is Protein-L-isoaspartate O-methyltransferase (211 aa).

The active site involves S60.

This sequence belongs to the methyltransferase superfamily. L-isoaspartyl/D-aspartyl protein methyltransferase family.

It is found in the cytoplasm. It catalyses the reaction [protein]-L-isoaspartate + S-adenosyl-L-methionine = [protein]-L-isoaspartate alpha-methyl ester + S-adenosyl-L-homocysteine. Functionally, catalyzes the methyl esterification of L-isoaspartyl residues in peptides and proteins that result from spontaneous decomposition of normal L-aspartyl and L-asparaginyl residues. It plays a role in the repair and/or degradation of damaged proteins. The polypeptide is Protein-L-isoaspartate O-methyltransferase (Pseudomonas syringae pv. tomato (strain ATCC BAA-871 / DC3000)).